The chain runs to 341 residues: Cobalt-precorrin-5B C(1)-methyltransferase (341 aa).

It belongs to the CbiD family.

The catalysed reaction is Co-precorrin-5B + S-adenosyl-L-methionine = Co-precorrin-6A + S-adenosyl-L-homocysteine. It functions in the pathway cofactor biosynthesis; adenosylcobalamin biosynthesis; cob(II)yrinate a,c-diamide from sirohydrochlorin (anaerobic route): step 6/10. Catalyzes the methylation of C-1 in cobalt-precorrin-5B to form cobalt-precorrin-6A. The sequence is that of Cobalt-precorrin-5B C(1)-methyltransferase from Picrophilus torridus (strain ATCC 700027 / DSM 9790 / JCM 10055 / NBRC 100828 / KAW 2/3).